A 479-amino-acid polypeptide reads, in one-letter code: Serine--tRNA ligase, mitochondrial (479 aa).

A mitochondrion-targeting transit peptide spans Met1–Leu42. An L-serine-binding site is contributed by Thr287–Glu289. Position 317–319 (Arg317–Glu319) interacts with ATP. Position 340 (Glu340) interacts with L-serine. Glu404–Ser407 is an ATP binding site. Thr438 provides a ligand contact to L-serine.

It belongs to the class-II aminoacyl-tRNA synthetase family. Type-1 seryl-tRNA synthetase subfamily. As to quaternary structure, homodimer. The tRNA molecule probably binds across the dimer.

The protein resides in the mitochondrion matrix. It carries out the reaction tRNA(Ser) + L-serine + ATP = L-seryl-tRNA(Ser) + AMP + diphosphate + H(+). Catalyzes the attachment of serine to tRNA(Ser). Is also probably able to aminoacylate tRNA(Sec) with serine, to form the misacylated tRNA L-seryl-tRNA(Sec), which will be further converted into selenocysteinyl-tRNA(Sec). The polypeptide is Serine--tRNA ligase, mitochondrial (dia4) (Schizosaccharomyces pombe (strain 972 / ATCC 24843) (Fission yeast)).